Here is a 343-residue protein sequence, read N- to C-terminus: UDP-3-O-acylglucosamine N-acyltransferase (343 aa).

Residue His-245 is the Proton acceptor of the active site.

This sequence belongs to the transferase hexapeptide repeat family. LpxD subfamily. As to quaternary structure, homotrimer.

It catalyses the reaction a UDP-3-O-[(3R)-3-hydroxyacyl]-alpha-D-glucosamine + a (3R)-hydroxyacyl-[ACP] = a UDP-2-N,3-O-bis[(3R)-3-hydroxyacyl]-alpha-D-glucosamine + holo-[ACP] + H(+). It participates in bacterial outer membrane biogenesis; LPS lipid A biosynthesis. In terms of biological role, catalyzes the N-acylation of UDP-3-O-acylglucosamine using 3-hydroxyacyl-ACP as the acyl donor. Is involved in the biosynthesis of lipid A, a phosphorylated glycolipid that anchors the lipopolysaccharide to the outer membrane of the cell. The protein is UDP-3-O-acylglucosamine N-acyltransferase of Phenylobacterium zucineum (strain HLK1).